A 581-amino-acid chain; its full sequence is Pyridine nucleotide-disulfide oxidoreductase domain-containing protein 2 (581 aa).

38–71 is an FAD binding site; it reads VVIGAGHNGLVAAAYLQRLGVNTAVFERRHVIGG.

It belongs to the carotenoid/retinoid oxidoreductase family. In terms of assembly, interacts with COX5B; this interaction may contribute to localize PYROXD2 to the inner face of the inner mitochondrial membrane.

The protein resides in the mitochondrion matrix. In terms of biological role, probable oxidoreductase that may play a role as regulator of mitochondrial function. This is Pyridine nucleotide-disulfide oxidoreductase domain-containing protein 2 from Homo sapiens (Human).